A 1077-amino-acid chain; its full sequence is Error-prone DNA polymerase (1077 aa).

Belongs to the DNA polymerase type-C family. DnaE2 subfamily.

The protein resides in the cytoplasm. The enzyme catalyses DNA(n) + a 2'-deoxyribonucleoside 5'-triphosphate = DNA(n+1) + diphosphate. Functionally, DNA polymerase involved in damage-induced mutagenesis and translesion synthesis (TLS). It is not the major replicative DNA polymerase. The protein is Error-prone DNA polymerase of Brucella suis biovar 1 (strain 1330).